The sequence spans 510 residues: D-allose import ATP-binding protein AlsA (510 aa).

ABC transporter domains lie at 6–245 and 260–509; these read ISMA…VGRE and LAHE…ALPQ. 38 to 45 lines the ATP pocket; that stretch reads GENGAGKS.

The protein belongs to the ABC transporter superfamily. D-allose importer (TC 3.A.1.2.6) family. In terms of assembly, the complex is composed of two ATP-binding proteins (AlsA), two transmembrane proteins (AlsC) and a solute-binding protein (AlsB).

It localises to the cell inner membrane. It carries out the reaction D-allose(out) + ATP + H2O = D-allose(in) + ADP + phosphate + H(+). In terms of biological role, part of the ABC transporter complex AlsBAC involved in D-allose import. Probably responsible for energy coupling to the transport system. This is D-allose import ATP-binding protein AlsA (alsA) from Escherichia coli (strain K12).